Here is a 926-residue protein sequence, read N- to C-terminus: Storkhead-box protein 2 (926 aa).

Disordered stretches follow at residues 1–32 (MKKTRSTTLRRAWPSSDFSDRASDRMRSRSEK), 338–391 (EEEK…HLDI), 452–529 (EMPF…SYID), 564–588 (KEPSSACSLLEPGKPPESLPSYGEL), 632–672 (GVKK…GGVA), 724–803 (LKSH…GTMQ), and 825–926 (LAPK…VTSV). Over residues 18–32 (FSDRASDRMRSRSEK) the composition is skewed to basic and acidic residues. A compositionally biased stretch (basic residues) spans 353 to 378 (HSGRSKKSRTHRKSHGKSRSHSKTRV). Over residues 379 to 391 (SKGDPSDGSHLDI) the composition is skewed to basic and acidic residues. The segment covering 463–472 (SHSKVHRSHS) has biased composition (basic residues). Positions 473-495 (HTQDRRSRNERSNKAKERSRSMD) are enriched in basic and acidic residues. Residues 518–529 (QDDQTPSQSYID) show a composition bias toward polar residues. The span at 632 to 658 (GVKKLSPSDRQVPHSSREPVGHKEESP) shows a compositional bias: basic and acidic residues. Polar residues predominate over residues 746–769 (LGTSAAQAMPASQRQQESGGNQEA). The span at 785–799 (GANKNTEEEKNREDV) shows a compositional bias: basic and acidic residues. Composition is skewed to polar residues over residues 847–884 (MDSSSITVDSGFNSPRTRESLASNTSSIVESNRRQNPA) and 914–926 (KPSNCLQASVTSV).

This is Storkhead-box protein 2 (STOX2) from Homo sapiens (Human).